The chain runs to 177 residues: Protein VERNALIZATION 3 (177 aa).

It belongs to the phosphatidylethanolamine-binding protein family. In terms of tissue distribution, expressed in leaves but not in shoot apex.

Involved in the regulation of vernalization and of flowering time; this process in essential for flowering in cv. Bd29-1 but seems do not occur in cv. Bd21. In Brachypodium distachyon (Purple false brome), this protein is Protein VERNALIZATION 3.